A 434-amino-acid polypeptide reads, in one-letter code: Nicotinate phosphoribosyltransferase (434 aa).

Histidine 242 carries the phosphohistidine; by autocatalysis modification.

This sequence belongs to the NAPRTase family. Transiently phosphorylated on a His residue during the reaction cycle. Phosphorylation strongly increases the affinity for substrates and increases the rate of nicotinate D-ribonucleotide production. Dephosphorylation regenerates the low-affinity form of the enzyme, leading to product release.

The catalysed reaction is nicotinate + 5-phospho-alpha-D-ribose 1-diphosphate + ATP + H2O = nicotinate beta-D-ribonucleotide + ADP + phosphate + diphosphate. It functions in the pathway cofactor biosynthesis; NAD(+) biosynthesis; nicotinate D-ribonucleotide from nicotinate: step 1/1. Its function is as follows. Catalyzes the synthesis of beta-nicotinate D-ribonucleotide from nicotinate and 5-phospho-D-ribose 1-phosphate at the expense of ATP. The polypeptide is Nicotinate phosphoribosyltransferase (Brucella anthropi (strain ATCC 49188 / DSM 6882 / CCUG 24695 / JCM 21032 / LMG 3331 / NBRC 15819 / NCTC 12168 / Alc 37) (Ochrobactrum anthropi)).